We begin with the raw amino-acid sequence, 468 residues long: Zinc finger protein 672 (468 aa).

C2H2-type zinc fingers lie at residues 15–37 (YSCS…ERAH), 43–65 (FCCL…RWTH), 71–93 (YICS…LGTH), and 100–123 (RPCR…ARQH). The segment at 129–151 (HRCPLCARSFRQSALPFHLARAH) adopts a C2H2-type 5; degenerate zinc-finger fold. 9 consecutive C2H2-type zinc fingers follow at residues 167–189 (YHCT…SRIH), 202–224 (HLCG…LQRH), 230–252 (FKCP…QRTH), 258–280 (YACS…QRSH), 286–308 (HVCA…QRSH), 314–336 (FPCP…LRTH), 342–364 (YHCE…LRNH), 370–392 (HKCP…RKTH), and 398–420 (AECT…QRSH).

The protein belongs to the krueppel C2H2-type zinc-finger protein family.

It localises to the nucleus. In terms of biological role, may be involved in transcriptional regulation. In Mus musculus (Mouse), this protein is Zinc finger protein 672 (Znf672).